The sequence spans 85 residues: CDC42 small effector protein homolog (85 aa).

S-palmitoyl cysteine attachment occurs at residues C14 and C15. The region spanning 37–50 (IGNPTNFVHTGHIG) is the CRIB domain. S78 and S81 each carry phosphoserine.

This sequence belongs to the CDC42SE/SPEC family.

It is found in the cytoplasm. The protein localises to the cytoskeleton. Its subcellular location is the cell membrane. Functionally, probably involved in the organization of the actin cytoskeleton by acting downstream of CDC42, inducing actin filament assembly. The protein is CDC42 small effector protein homolog (Spec2) of Drosophila melanogaster (Fruit fly).